The following is a 621-amino-acid chain: Glutamine--fructose-6-phosphate aminotransferase [isomerizing] (621 aa).

Catalysis depends on Cys2, which acts as the Nucleophile; for GATase activity. Residues Cys2 to Ser223 enclose the Glutamine amidotransferase type-2 domain. SIS domains lie at Leu289 to Thr436 and Leu470 to Pro611. The active-site For Fru-6P isomerization activity is the Lys616.

In terms of assembly, homodimer.

It localises to the plastid. The protein localises to the chloroplast. It carries out the reaction D-fructose 6-phosphate + L-glutamine = D-glucosamine 6-phosphate + L-glutamate. Functionally, catalyzes the first step in hexosamine metabolism, converting fructose-6P into glucosamine-6P using glutamine as a nitrogen source. The polypeptide is Glutamine--fructose-6-phosphate aminotransferase [isomerizing] (Cyanidium caldarium (Red alga)).